The primary structure comprises 131 residues: Holo-[acyl-carrier-protein] synthase (131 aa).

Mg(2+)-binding residues include Asp8 and Glu59.

It belongs to the P-Pant transferase superfamily. AcpS family. Requires Mg(2+) as cofactor.

The protein resides in the cytoplasm. The enzyme catalyses apo-[ACP] + CoA = holo-[ACP] + adenosine 3',5'-bisphosphate + H(+). In terms of biological role, transfers the 4'-phosphopantetheine moiety from coenzyme A to a Ser of acyl-carrier-protein. The polypeptide is Holo-[acyl-carrier-protein] synthase (Orientia tsutsugamushi (strain Ikeda) (Rickettsia tsutsugamushi)).